Reading from the N-terminus, the 912-residue chain is Protein SLFN14 (912 aa).

A required for endoribonuclease activity region spans residues 206 to 391 (ESTHVEFKRF…KVHKFKEALQ (186 aa)). The required for ribosome binding stretch occupies residues 392–571 (RHLFPVTQEE…QMGCEFFNLL (180 aa)). Residue 593 to 600 (CFPGVRKT) participates in ATP binding.

This sequence belongs to the Schlafen family. Subgroup III subfamily. In terms of assembly, associates with ribosomes in an ATP-independent manner. It depends on Mg(2+) as a cofactor. Mn(2+) is required as a cofactor. As to expression, expressed in megakaryocytes and platelets (at protein level). Weakly expressed in melanocytes and malignant melanoma cells.

The protein localises to the nucleus. Functionally, shows no ribosome-associated and endoribonuclease activities. Its function is as follows. Displays polysome-associated endoribonuclease activity towards mRNAs and rRNAs. May play a role in RNA surveillance pathways by recognizing stalled ribosomes and triggering endonucleolytic cleavage of aberrant mRNAs. Cleaves different types of rRNAs and mRNAs in a magnesium- and manganese-dependent and ATP-independent manner. Involved in correct maturation of megakaryocytes and especially important for proplatelet extension. In Homo sapiens (Human), this protein is Protein SLFN14.